A 123-amino-acid chain; its full sequence is UPF0102 protein Maqu_2464 (123 aa).

Belongs to the UPF0102 family.

The polypeptide is UPF0102 protein Maqu_2464 (Marinobacter nauticus (strain ATCC 700491 / DSM 11845 / VT8) (Marinobacter aquaeolei)).